The following is a 600-amino-acid chain: Glutamine--fructose-6-phosphate aminotransferase [isomerizing] (600 aa).

The active-site Nucleophile; for GATase activity is the cysteine 2. The Glutamine amidotransferase type-2 domain maps to 2 to 217 (CGIVGYIGQL…DKEMVIVTDD (216 aa)). SIS domains follow at residues 283–422 (IAAA…KNGI) and 452–590 (IARE…VDKP). Catalysis depends on lysine 595, which acts as the For Fru-6P isomerization activity.

As to quaternary structure, homodimer.

It is found in the cytoplasm. The enzyme catalyses D-fructose 6-phosphate + L-glutamine = D-glucosamine 6-phosphate + L-glutamate. Catalyzes the first step in hexosamine metabolism, converting fructose-6P into glucosamine-6P using glutamine as a nitrogen source. This is Glutamine--fructose-6-phosphate aminotransferase [isomerizing] (glmS) from Bacillus spizizenii (strain ATCC 23059 / NRRL B-14472 / W23) (Bacillus subtilis subsp. spizizenii).